A 536-amino-acid polypeptide reads, in one-letter code: Adenine deaminase (536 aa).

Positions 1 to 24 (MTPSPHDLLHCGMNSQDRDETNGD) are disordered.

Belongs to the metallo-dependent hydrolases superfamily. Adenine deaminase family. It depends on Mn(2+) as a cofactor.

The catalysed reaction is adenine + H2O + H(+) = hypoxanthine + NH4(+). In Deinococcus radiodurans (strain ATCC 13939 / DSM 20539 / JCM 16871 / CCUG 27074 / LMG 4051 / NBRC 15346 / NCIMB 9279 / VKM B-1422 / R1), this protein is Adenine deaminase.